Reading from the N-terminus, the 1059-residue chain is Ceruloplasmin (1059 aa).

The first 19 residues, 1-19 (MKFLLLSALLFLHSSLAWT), serve as a signal peptide directing secretion. 6 Plastocyanin-like domains span residues 20 to 199 (REKH…LILC), 208 to 356 (KEEN…VRDC), 369 to 554 (HVRH…MKIC), 564 to 712 (RQKD…VNQC), 724 to 894 (GERT…LIVC), and 902 to 1055 (FNPK…PNQE). The Na(+) site is built by Tyr55, Gly64, and Tyr67. The Cu(2+) site is built by His120 and His122. An O2-binding site is contributed by His120. Residue Lys128 participates in Ca(2+) binding. A glycan (N-linked (GlcNAc...) asparagine) is linked at Asn138. Ca(2+) is bound by residues Gln143, Asp146, and Asp147. A disulfide bridge connects residues Cys173 and Cys199. 2 residues coordinate Cu(2+): His179 and His181. His179 serves as a coordination point for O2. A glycan (N-linked (GlcNAc...) asparagine) is linked at Asn226. Position 255 (Ser255) interacts with Na(+). Cys275 and Cys356 are oxidised to a cystine. His294, Cys337, and His342 together coordinate Cu(2+). N-linked (GlcNAc...) asparagine glycosylation is present at Asn396. The Na(+) site is built by Phe407, Gly416, and Tyr419. Cys528 and Cys554 are disulfide-bonded. Residue Asn582 is glycosylated (N-linked (GlcNAc...) asparagine). Ser611 contributes to the Na(+) binding site. The cysteines at positions 631 and 712 are disulfide-linked. Cu(2+) is bound by residues His650, Cys693, His698, and Met703. The Nucleophile; for glutathione peroxidase activity role is filled by Cys693. An N-linked (GlcNAc...) asparagine glycan is attached at Asn756. Na(+) is bound by residues Phe761, Gly770, and Tyr773. A disulfide bridge links Cys868 with Cys894. An N-linked (GlcNAc...) asparagine glycan is attached at Asn920. Ser949 is a binding site for Na(+). Residues His988, His991, His993, His1033, Cys1034, His1035, His1039, and Met1044 each coordinate Cu(2+). O2 is bound by residues His991 and His993. His1035 lines the O2 pocket.

It belongs to the multicopper oxidase family. Found in a complex with MPO and LTF; interacts directly with MPO and LTF, which allows Fe(3+) incorporation into LTF, activation of CP ferroxidase activity and protection of CP antioxidant properties by MPO. Requires Cu(2+) as cofactor. As to expression, synthesized in liver and secreted into the plasma. Also choroid plexus, yolk sac, placenta, and testis; not in stomach and small intestine. Fetal lung and liver.

It is found in the secreted. The catalysed reaction is 4 Fe(2+) + O2 + 4 H(+) = 4 Fe(3+) + 2 H2O. It carries out the reaction 4 Cu(+) + O2 + 4 H(+) = 4 Cu(2+) + 2 H2O. The enzyme catalyses a hydroperoxide + 2 glutathione = an alcohol + glutathione disulfide + H2O. It catalyses the reaction 4 nitric oxide + O2 + 2 H2O = 4 nitrite + 4 H(+). The catalysed reaction is 2 glutathione + H2O2 = glutathione disulfide + 2 H2O. Its function is as follows. Multifunctional blue, copper-binding (6-7 atoms per molecule) glycoprotein. It has ferroxidase activity oxidizing Fe(2+) to Fe(3+) without releasing radical oxygen species. It is involved in iron transport across the cell membrane. Copper ions provide a large number of enzymatic activites. Oxidizes highly toxic ferrous ions to the ferric state for further incorporation onto apo-transferrins, catalyzes Cu(+) oxidation and promotes the oxidation of biogenic amines such as norepinephrin and serotonin. Provides Cu(2+) ions for the ascorbate-mediated deaminase degradation of the heparan sulfate chains of GPC1. Has glutathione peroxidase-like activity, can remove both hydrogen peroxide and lipid hydroperoxide in the presence of thiols. Also shows NO-oxidase and NO2 synthase activities that determine endocrine NO homeostasis. The protein is Ceruloplasmin (Cp) of Rattus norvegicus (Rat).